Reading from the N-terminus, the 232-residue chain is 5'-methylthioadenosine/S-adenosylhomocysteine nucleosidase (232 aa).

The Proton acceptor role is filled by Glu12. Substrate is bound by residues Gly78, Ile152, and 173-174 (ME). Residue Asp197 is the Proton donor of the active site.

This sequence belongs to the PNP/UDP phosphorylase family. MtnN subfamily. Homodimer.

It catalyses the reaction S-adenosyl-L-homocysteine + H2O = S-(5-deoxy-D-ribos-5-yl)-L-homocysteine + adenine. It carries out the reaction S-methyl-5'-thioadenosine + H2O = 5-(methylsulfanyl)-D-ribose + adenine. The catalysed reaction is 5'-deoxyadenosine + H2O = 5-deoxy-D-ribose + adenine. It participates in amino-acid biosynthesis; L-methionine biosynthesis via salvage pathway; S-methyl-5-thio-alpha-D-ribose 1-phosphate from S-methyl-5'-thioadenosine (hydrolase route): step 1/2. Its function is as follows. Catalyzes the irreversible cleavage of the glycosidic bond in both 5'-methylthioadenosine (MTA) and S-adenosylhomocysteine (SAH/AdoHcy) to adenine and the corresponding thioribose, 5'-methylthioribose and S-ribosylhomocysteine, respectively. Also cleaves 5'-deoxyadenosine, a toxic by-product of radical S-adenosylmethionine (SAM) enzymes, into 5-deoxyribose and adenine. Thus, is required for in vivo function of the radical SAM enzymes biotin synthase and lipoic acid synthase, that are inhibited by 5'-deoxyadenosine accumulation. The polypeptide is 5'-methylthioadenosine/S-adenosylhomocysteine nucleosidase (Salmonella agona (strain SL483)).